The following is a 461-amino-acid chain: MESSKVILYPSPGIGHLVSMVELGKLIHTHHPSLSVIILVLPATYETGSTTTYINTVSTTTPFITFHHLPVIPLPPDSSSEFIDLAFDIPQLYNPVVYNTLVAISETSTIKAVILDFFVNAAFQISKSLDLPTYYFFTSGASGLCAFLHLPTIYKTYSGNFKDLDTFINIPGVPPIHSSDMPTVLFDKESNSYKNFVKTSNNMAKSSGVIANSFLQLEERAAQTLRDGKSITDGPSPPIYLIGPLIASGNQVDHNENECLKWLNTQPSKSVVFLCFGSQGVFKKEQLKEIAVGLERSGQRFLWVVRKPPSDGGKEFGLDDVLPEGFVARTKEKGLVVKNWAPQPAILGHESVGGFVSHCGWNSSLEAVVFGVPMVAWPLYAEQKMNRVYLVEEIKVALWLRMSADGFVSAEAVEETVRQLMDGRRVRERILEMSTKAKAAVEDGGSSRVDFFKLTESWTHK.

UDP-alpha-D-glucose is bound by residues Ser-278, 340–341 (WA), 358–366 (HCGWNSSLE), and 380–383 (YAEQ).

This sequence belongs to the UDP-glycosyltransferase family.

May glycosylate diterpenes or flavonols in leaves. This Stevia rebaudiana (Stevia) protein is UDP-glycosyltransferase 88B1.